A 346-amino-acid chain; its full sequence is Leucine zipper protein 2 (346 aa).

An N-terminal signal peptide occupies residues 1 to 19 (MKFSPAHYLLPLLPALVLS). Residues 16–211 (LVLSTRQDYE…QMKAMKETVQ (196 aa)) adopt a coiled-coil conformation. Asparagine 133 carries N-linked (GlcNAc...) asparagine glycosylation. A leucine-zipper region spans residues 164 to 192 (LRYGKKDLLFKAQQLTDLEQKLAVAKNEL). Disordered stretches follow at residues 221 to 240 (QPPP…LLPP) and 248 to 346 (PDAA…EKIL). A compositionally biased stretch (low complexity) spans 250 to 261 (AAAKSKPQQSAS). The segment covering 262–283 (GNNESSQVESTKEGNPSTTACD) has biased composition (polar residues). Asparagine 264 carries an N-linked (GlcNAc...) asparagine glycan. Residues 286-298 (DEGRPCSMKHKES) show a composition bias toward basic and acidic residues. A glycan (N-linked (GlcNAc...) asparagine) is linked at asparagine 302.

The protein resides in the secreted. This chain is Leucine zipper protein 2 (LUZP2), found in Homo sapiens (Human).